The sequence spans 138 residues: Large ribosomal subunit protein uL16 (138 aa).

This sequence belongs to the universal ribosomal protein uL16 family. Part of the 50S ribosomal subunit.

Binds 23S rRNA and is also seen to make contacts with the A and possibly P site tRNAs. This is Large ribosomal subunit protein uL16 from Syntrophobacter fumaroxidans (strain DSM 10017 / MPOB).